A 148-amino-acid polypeptide reads, in one-letter code: Large ribosomal subunit protein uL15 (148 aa).

Residues 1–30 (MPSRLRKTRKLRGHVSHGHGRIGKHRKHPG) show a composition bias toward basic residues. The segment at 1–37 (MPSRLRKTRKLRGHVSHGHGRIGKHRKHPGGRGNAGG) is disordered. H39 is subject to (3S)-3-hydroxyhistidine. An N6-acetyllysine mark is found at K47 and K55. At S68 the chain carries Phosphoserine. K110 is subject to N6-acetyllysine.

This sequence belongs to the universal ribosomal protein uL15 family. In terms of assembly, component of the large ribosomal subunit. Hydroxylated on His-39 by MINA.

The protein localises to the cytoplasm. Component of the large ribosomal subunit. The ribosome is a large ribonucleoprotein complex responsible for the synthesis of proteins in the cell. This chain is Large ribosomal subunit protein uL15 (Rpl27a), found in Mus musculus (Mouse).